A 117-amino-acid polypeptide reads, in one-letter code: Small ribosomal subunit protein uS13 (117 aa).

A disordered region spans residues 94 to 117 (SLPLRGQRTKTNARTRKGPRRLIK).

Belongs to the universal ribosomal protein uS13 family. Part of the 30S ribosomal subunit. Forms a loose heterodimer with protein S19. Forms two bridges to the 50S subunit in the 70S ribosome.

Functionally, located at the top of the head of the 30S subunit, it contacts several helices of the 16S rRNA. In the 70S ribosome it contacts the 23S rRNA (bridge B1a) and protein L5 of the 50S subunit (bridge B1b), connecting the 2 subunits; these bridges are implicated in subunit movement. Contacts the tRNAs in the A and P-sites. The sequence is that of Small ribosomal subunit protein uS13 from Vesicomyosocius okutanii subsp. Calyptogena okutanii (strain HA).